The primary structure comprises 329 residues: Very long chain fatty acid elongase 7 (329 aa).

7 helical membrane passes run 26-46 (YPLM…AYIV), 66-86 (LIVY…ESCI), 114-134 (GCWW…FFVM), 146-166 (VIHH…TPGG), 170-190 (FFGF…MLAA), 205-225 (LTVM…QLFF), and 233-253 (IGFA…FSNF).

The protein belongs to the ELO family.

The protein localises to the membrane. The enzyme catalyses a very-long-chain acyl-CoA + malonyl-CoA + H(+) = a very-long-chain 3-oxoacyl-CoA + CO2 + CoA. In terms of biological role, catalyzes the first and rate-limiting reaction of the four reactions that constitute the long-chain fatty acids elongation cycle. This endoplasmic reticulum-bound enzymatic process allows the addition of 2 carbons to the chain of long- and very long-chain fatty acids (VLCFAs) per cycle. This Drosophila melanogaster (Fruit fly) protein is Very long chain fatty acid elongase 7.